A 131-amino-acid polypeptide reads, in one-letter code: Colicin-N immunity protein (131 aa).

The next 2 helical transmembrane spans lie at 66–84 (ILTP…FLLT) and 104–124 (VFVF…IFVL).

It is found in the cell membrane. The sequence is that of Colicin-N immunity protein (cni) from Escherichia coli.